A 502-amino-acid chain; its full sequence is Probable mitochondrial-processing peptidase subunit alpha (502 aa).

Belongs to the peptidase M16 family. In terms of assembly, heterodimer of mas2 (alpha) and mas1 (beta) subunits, forming the mitochondrial processing protease (MPP) in which mas2 is involved in substrate recognition and binding and mas1 is the catalytic subunit.

Its subcellular location is the mitochondrion matrix. Substrate recognition and binding subunit of the essential mitochondrial processing protease (MPP), which cleaves the mitochondrial sequence off newly imported precursors proteins. This chain is Probable mitochondrial-processing peptidase subunit alpha (mas2), found in Schizosaccharomyces pombe (strain 972 / ATCC 24843) (Fission yeast).